A 244-amino-acid polypeptide reads, in one-letter code: uncharacterized protein (244 aa).

2 consecutive transmembrane segments (helical) span residues 29–49 (WIPW…TQHM) and 139–159 (LGMK…ATVI).

Belongs to the FMP10 family.

Its subcellular location is the mitochondrion membrane. This is an uncharacterized protein from Saccharomyces cerevisiae (strain ATCC 204508 / S288c) (Baker's yeast).